The chain runs to 131 residues: Small ribosomal subunit protein uS8 (131 aa).

Belongs to the universal ribosomal protein uS8 family. In terms of assembly, part of the 30S ribosomal subunit. Contacts proteins S5 and S12.

Functionally, one of the primary rRNA binding proteins, it binds directly to 16S rRNA central domain where it helps coordinate assembly of the platform of the 30S subunit. This chain is Small ribosomal subunit protein uS8, found in Chlorobium luteolum (strain DSM 273 / BCRC 81028 / 2530) (Pelodictyon luteolum).